Here is a 320-residue protein sequence, read N- to C-terminus: Beta-ketoacyl-[acyl-carrier-protein] synthase III (320 aa).

Catalysis depends on residues Cys-114 and His-247. The interval 248 to 252 (QANRR) is ACP-binding. Asn-277 is a catalytic residue.

The protein belongs to the thiolase-like superfamily. FabH family. In terms of assembly, homodimer.

It localises to the cytoplasm. The enzyme catalyses malonyl-[ACP] + acetyl-CoA + H(+) = 3-oxobutanoyl-[ACP] + CO2 + CoA. The protein operates within lipid metabolism; fatty acid biosynthesis. In terms of biological role, catalyzes the condensation reaction of fatty acid synthesis by the addition to an acyl acceptor of two carbons from malonyl-ACP. Catalyzes the first condensation reaction which initiates fatty acid synthesis and may therefore play a role in governing the total rate of fatty acid production. Possesses both acetoacetyl-ACP synthase and acetyl transacylase activities. Its substrate specificity determines the biosynthesis of branched-chain and/or straight-chain of fatty acids. The polypeptide is Beta-ketoacyl-[acyl-carrier-protein] synthase III (Neisseria meningitidis serogroup C (strain 053442)).